Consider the following 287-residue polypeptide: Spore wall protein 7 (287 aa).

The first 19 residues, 1 to 19 (MIKGLIYLFLFRCLEGRLA), serve as a signal peptide directing secretion.

Belongs to the SWP7 family. As to quaternary structure, interacts with SWP9.

Its subcellular location is the cytoplasm. The protein localises to the spore wall. The protein resides in the spore polar tube. Involved in adherence of spores to the host cell surface and in infection efficiency. The polypeptide is Spore wall protein 7 (SWP7) (Nosema bombycis (strain CQ1 / CVCC 102059) (Microsporidian parasite)).